The chain runs to 200 residues: BREX protein BrxA (200 aa).

It belongs to the BrxA family.

BREX systems (bacteriophage exclusion) provide immunity against bacteriophage. Part of a type 1 BREX system. This system allows phage adsorption but prevents phage DNA replication, without degradation of the phage DNA. Methylation of bacterial DNA by PglX probably guides self/non-self discrimination. When the brxA-brxB-brxC-pglX and pglZ-brxL operons are transformed into a susceptible B.subtilis strain (BEST7003) they confer resistance to bacteriophages SPbeta, SP16, Zeta, phi3T and SP02 and partial protection to phages SP01 and SP82G (these include lytic and temperate phage). They do not protect against phages phi105, rho10 or rho14. Additionally confers a very slight reduction in efficiency of plasmid transformation. The protein is BREX protein BrxA of Bacillus cereus (strain H3081.97).